Reading from the N-terminus, the 416-residue chain is Bifunctional protein GlmU (416 aa).

The pyrophosphorylase stretch occupies residues 1–229 (MTNYAIILAA…FNESLGVNDR (229 aa)). Residues 8–11 (LAAG), Lys-22, Gln-72, and 77–78 (GT) contribute to the UDP-N-acetyl-alpha-D-glucosamine site. Residue Asp-102 participates in Mg(2+) binding. The UDP-N-acetyl-alpha-D-glucosamine site is built by Gly-139, Glu-154, Asn-169, and Asn-227. Asn-227 is a Mg(2+) binding site. The linker stretch occupies residues 230 to 250 (VALATAETVMRQRITQKHMVN). The interval 251-416 (GVTFQNPETV…DSHCTFGSWR (166 aa)) is N-acetyltransferase. 2 residues coordinate UDP-N-acetyl-alpha-D-glucosamine: Arg-332 and Lys-350. His-362 serves as the catalytic Proton acceptor. The UDP-N-acetyl-alpha-D-glucosamine site is built by Tyr-365 and Asn-376. Acetyl-CoA-binding positions include Ala-379 and 385 to 386 (NY).

The protein in the N-terminal section; belongs to the N-acetylglucosamine-1-phosphate uridyltransferase family. In the C-terminal section; belongs to the transferase hexapeptide repeat family. In terms of assembly, homotrimer. It depends on Mg(2+) as a cofactor.

Its subcellular location is the cytoplasm. The catalysed reaction is alpha-D-glucosamine 1-phosphate + acetyl-CoA = N-acetyl-alpha-D-glucosamine 1-phosphate + CoA + H(+). It catalyses the reaction N-acetyl-alpha-D-glucosamine 1-phosphate + UTP + H(+) = UDP-N-acetyl-alpha-D-glucosamine + diphosphate. The protein operates within nucleotide-sugar biosynthesis; UDP-N-acetyl-alpha-D-glucosamine biosynthesis; N-acetyl-alpha-D-glucosamine 1-phosphate from alpha-D-glucosamine 6-phosphate (route II): step 2/2. It functions in the pathway nucleotide-sugar biosynthesis; UDP-N-acetyl-alpha-D-glucosamine biosynthesis; UDP-N-acetyl-alpha-D-glucosamine from N-acetyl-alpha-D-glucosamine 1-phosphate: step 1/1. It participates in bacterial outer membrane biogenesis; LPS lipid A biosynthesis. Its function is as follows. Catalyzes the last two sequential reactions in the de novo biosynthetic pathway for UDP-N-acetylglucosamine (UDP-GlcNAc). The C-terminal domain catalyzes the transfer of acetyl group from acetyl coenzyme A to glucosamine-1-phosphate (GlcN-1-P) to produce N-acetylglucosamine-1-phosphate (GlcNAc-1-P), which is converted into UDP-GlcNAc by the transfer of uridine 5-monophosphate (from uridine 5-triphosphate), a reaction catalyzed by the N-terminal domain. This is Bifunctional protein GlmU from Streptococcus pyogenes serotype M12 (strain MGAS2096).